We begin with the raw amino-acid sequence, 295 residues long: GTPase Era (295 aa).

An Era-type G domain is found at 7 to 176; that stretch reads KTISVCIIGR…IKSKAKVSPW (170 aa). Positions 15–22 are G1; sequence GRPNSGKS. 15–22 provides a ligand contact to GTP; the sequence is GRPNSGKS. The G2 stretch occupies residues 41 to 45; that stretch reads QTTRS. Positions 62–65 are G3; it reads DTPG. GTP contacts are provided by residues 62–66 and 124–127; these read DTPGI and NKID. The segment at 124–127 is G4; that stretch reads NKID. The interval 152 to 154 is G5; that stretch reads ISA. The KH type-2 domain maps to 204–281; that stretch reads LQQELPYKLT…HLFLFVKVHA (78 aa).

The protein belongs to the TRAFAC class TrmE-Era-EngA-EngB-Septin-like GTPase superfamily. Era GTPase family. In terms of assembly, monomer.

It localises to the cytoplasm. The protein resides in the cell inner membrane. Functionally, an essential GTPase that binds both GDP and GTP, with rapid nucleotide exchange. Plays a role in 16S rRNA processing and 30S ribosomal subunit biogenesis and possibly also in cell cycle regulation and energy metabolism. The sequence is that of GTPase Era from Rickettsia prowazekii (strain Madrid E).